A 139-amino-acid chain; its full sequence is Large-conductance mechanosensitive channel (139 aa).

A run of 2 helical transmembrane segments spans residues 9–29 (AFAV…GAAF) and 79–99 (IQTV…VKAI).

The protein belongs to the MscL family. In terms of assembly, homopentamer.

Its subcellular location is the cell inner membrane. Channel that opens in response to stretch forces in the membrane lipid bilayer. May participate in the regulation of osmotic pressure changes within the cell. The polypeptide is Large-conductance mechanosensitive channel (Pseudomonas putida (strain GB-1)).